A 421-amino-acid polypeptide reads, in one-letter code: ATP-dependent RNA helicase RhlB (421 aa).

The Q motif signature appears at 9–37 (THFADLPINEQVVKALSAANFSHCTPIQA). In terms of domain architecture, Helicase ATP-binding spans 40 to 216 (LPPLLEGNDI…YEHMDNPTHV (177 aa)). 53-60 (AQTGTGKT) is a binding site for ATP. A DEAD box motif is present at residues 162 to 165 (DEAD). In terms of domain architecture, Helicase C-terminal spans 240–387 (KMALLLSLME…VTEYQADALL (148 aa)). Residues 389-421 (DVTPPKPRHKKRMQNGRNPQKRQSSGSRNRRKP) form a disordered region. Polar residues predominate over residues 403–415 (NGRNPQKRQSSGS).

The protein belongs to the DEAD box helicase family. RhlB subfamily. As to quaternary structure, component of the RNA degradosome, which is a multiprotein complex involved in RNA processing and mRNA degradation.

The protein resides in the cytoplasm. It catalyses the reaction ATP + H2O = ADP + phosphate + H(+). In terms of biological role, DEAD-box RNA helicase involved in RNA degradation. Has RNA-dependent ATPase activity and unwinds double-stranded RNA. In Pseudoalteromonas atlantica (strain T6c / ATCC BAA-1087), this protein is ATP-dependent RNA helicase RhlB.